Consider the following 340-residue polypeptide: Biotin synthase (340 aa).

A Radical SAM core domain is found at Ser53–Arg280. Cys68, Cys72, and Cys75 together coordinate [4Fe-4S] cluster. Residues Cys112, Cys143, Cys203, and Arg275 each contribute to the [2Fe-2S] cluster site.

It belongs to the radical SAM superfamily. Biotin synthase family. As to quaternary structure, homodimer. It depends on [4Fe-4S] cluster as a cofactor. The cofactor is [2Fe-2S] cluster.

It carries out the reaction (4R,5S)-dethiobiotin + (sulfur carrier)-SH + 2 reduced [2Fe-2S]-[ferredoxin] + 2 S-adenosyl-L-methionine = (sulfur carrier)-H + biotin + 2 5'-deoxyadenosine + 2 L-methionine + 2 oxidized [2Fe-2S]-[ferredoxin]. It functions in the pathway cofactor biosynthesis; biotin biosynthesis; biotin from 7,8-diaminononanoate: step 2/2. In terms of biological role, catalyzes the conversion of dethiobiotin (DTB) to biotin by the insertion of a sulfur atom into dethiobiotin via a radical-based mechanism. The polypeptide is Biotin synthase (Bordetella petrii (strain ATCC BAA-461 / DSM 12804 / CCUG 43448)).